Here is a 354-residue protein sequence, read N- to C-terminus: Homeobox protein Nkx-2.4 (354 aa).

A DNA-binding region (homeobox) is located at residues 189 to 248; sequence RRKRRVLFSQAQVYELERRFKQQKYLSAPEREHLASMIHLTPTQVKIWFQNHRYKMKRQA. Residues 246–329 form a disordered region; it reads RQAKDKAAQQ…PALHGPGGGL (84 aa). A compositionally biased stretch (pro residues) spans 263 to 272; the sequence is GPPPPPPPSP.

The protein belongs to the NK-2 homeobox family.

The protein localises to the nucleus. Its function is as follows. Probable transcription factor. This is Homeobox protein Nkx-2.4 (NKX2-4) from Homo sapiens (Human).